A 374-amino-acid chain; its full sequence is UPF0754 membrane protein SA1664 (374 aa).

Helical transmembrane passes span 4-24 (LFII…TNVI) and 354-374 (SLGF…AIFV).

The protein belongs to the UPF0754 family.

Its subcellular location is the cell membrane. This Staphylococcus aureus (strain N315) protein is UPF0754 membrane protein SA1664.